A 317-amino-acid chain; its full sequence is Ribonuclease Z (317 aa).

Residues H63, H65, D67, H68, H143, D214, and H272 each coordinate Zn(2+). D67 serves as the catalytic Proton acceptor.

The protein belongs to the RNase Z family. As to quaternary structure, homodimer. It depends on Zn(2+) as a cofactor.

It carries out the reaction Endonucleolytic cleavage of RNA, removing extra 3' nucleotides from tRNA precursor, generating 3' termini of tRNAs. A 3'-hydroxy group is left at the tRNA terminus and a 5'-phosphoryl group is left at the trailer molecule.. In terms of biological role, zinc phosphodiesterase, which displays some tRNA 3'-processing endonuclease activity. Probably involved in tRNA maturation, by removing a 3'-trailer from precursor tRNA. In Ligilactobacillus salivarius (strain UCC118) (Lactobacillus salivarius), this protein is Ribonuclease Z.